A 213-amino-acid polypeptide reads, in one-letter code: MSAEILNPNLRRVVLASNNAGKLREFSALFAPLGIELVPQSELGVSEAEEPHATFVENALAKARHASRHTGLPALADDSGLCVVALGGAPGVHSARYAQQPGGARSDAANNALLVRELAAAGDRRAWYVALLALVRTENDPCPLIGEGLWHGEIVDAPAGEHGFGYDPHFYLPQQGCTAAQLAPEHKNRISHRAQALAQLLDKLRATGPVDRP.

Ser-17–Lys-22 provides a ligand contact to substrate. Mg(2+)-binding residues include Glu-49 and Asp-78. Asp-78 (proton acceptor) is an active-site residue. Substrate is bound by residues Ser-79, Phe-164 to Asp-167, Lys-187, and His-192 to Arg-193.

This sequence belongs to the HAM1 NTPase family. Homodimer. Mg(2+) is required as a cofactor.

The enzyme catalyses XTP + H2O = XMP + diphosphate + H(+). It catalyses the reaction dITP + H2O = dIMP + diphosphate + H(+). The catalysed reaction is ITP + H2O = IMP + diphosphate + H(+). Its function is as follows. Pyrophosphatase that catalyzes the hydrolysis of nucleoside triphosphates to their monophosphate derivatives, with a high preference for the non-canonical purine nucleotides XTP (xanthosine triphosphate), dITP (deoxyinosine triphosphate) and ITP. Seems to function as a house-cleaning enzyme that removes non-canonical purine nucleotides from the nucleotide pool, thus preventing their incorporation into DNA/RNA and avoiding chromosomal lesions. The chain is dITP/XTP pyrophosphatase from Bordetella bronchiseptica (strain ATCC BAA-588 / NCTC 13252 / RB50) (Alcaligenes bronchisepticus).